The sequence spans 39 residues: Metallocarboxypeptidase inhibitor (39 aa).

Gln1 is modified (pyrrolidone carboxylic acid). 3 cysteine pairs are disulfide-bonded: Cys8-Cys24, Cys12-Cys27, and Cys18-Cys34.

Highly concentrated in tubers. Closely related but distinct forms of MCPI are present in leaves, stems and buds.

May play a defensive role against insect attacks. Inhibits A.aegypti carboxypeptidase CPB1. The protein is Metallocarboxypeptidase inhibitor of Solanum tuberosum (Potato).